The following is a 268-amino-acid chain: LOB domain-containing protein 22 (268 aa).

A disordered region spans residues 1–31 (MPSGKPSSVFPLHPKPTPLKPSSSTSSSNNN). Positions 22–31 (SSSTSSSNNN) are enriched in low complexity. The LOB domain maps to 35-136 (QACAACKYQR…NELEIVLQQL (102 aa)).

It belongs to the LOB domain-containing protein family.

This Arabidopsis thaliana (Mouse-ear cress) protein is LOB domain-containing protein 22 (LBD22).